We begin with the raw amino-acid sequence, 451 residues long: Coproporphyrinogen III oxidase (451 aa).

FAD contacts are provided by residues glycine 10–glycine 15, aspartate 36–proline 37, glycine 58–alanine 61, valine 242, tryptophan 393, and isoleucine 429–valine 431.

This sequence belongs to the protoporphyrinogen/coproporphyrinogen oxidase family. Coproporphyrinogen III oxidase subfamily. It depends on FAD as a cofactor.

The protein resides in the cytoplasm. The catalysed reaction is coproporphyrinogen III + 3 O2 = coproporphyrin III + 3 H2O2. It participates in porphyrin-containing compound metabolism; protoheme biosynthesis. Involved in coproporphyrin-dependent heme b biosynthesis. Catalyzes the oxidation of coproporphyrinogen III to coproporphyrin III. The chain is Coproporphyrinogen III oxidase from Mycobacterium leprae (strain TN).